The chain runs to 215 residues: Pyrrolidone-carboxylate peptidase (215 aa).

Catalysis depends on residues glutamate 81, cysteine 144, and histidine 168.

Belongs to the peptidase C15 family. Homotetramer.

The protein resides in the cytoplasm. The enzyme catalyses Release of an N-terminal pyroglutamyl group from a polypeptide, the second amino acid generally not being Pro.. Removes 5-oxoproline from various penultimate amino acid residues except L-proline. The sequence is that of Pyrrolidone-carboxylate peptidase (pcp) from Bacillus subtilis (strain 168).